A 315-amino-acid chain; its full sequence is Tetraacyldisaccharide 4'-kinase (315 aa).

An ATP-binding site is contributed by 52–59 (TVGGTGKT).

This sequence belongs to the LpxK family.

It carries out the reaction a lipid A disaccharide + ATP = a lipid IVA + ADP + H(+). Its pathway is glycolipid biosynthesis; lipid IV(A) biosynthesis; lipid IV(A) from (3R)-3-hydroxytetradecanoyl-[acyl-carrier-protein] and UDP-N-acetyl-alpha-D-glucosamine: step 6/6. Transfers the gamma-phosphate of ATP to the 4'-position of a tetraacyldisaccharide 1-phosphate intermediate (termed DS-1-P) to form tetraacyldisaccharide 1,4'-bis-phosphate (lipid IVA). The protein is Tetraacyldisaccharide 4'-kinase of Ruthia magnifica subsp. Calyptogena magnifica.